The chain runs to 157 residues: Small ribosomal subunit protein uS13 (157 aa).

This sequence belongs to the universal ribosomal protein uS13 family. Part of the 30S ribosomal subunit. Forms a loose heterodimer with protein S19. Forms two bridges to the 50S subunit in the 70S ribosome.

Its function is as follows. Located at the top of the head of the 30S subunit, it contacts several helices of the 16S rRNA. In the 70S ribosome it contacts the 23S rRNA (bridge B1a) and protein L5 of the 50S subunit (bridge B1b), connecting the 2 subunits; these bridges are implicated in subunit movement. The polypeptide is Small ribosomal subunit protein uS13 (Thermofilum pendens (strain DSM 2475 / Hrk 5)).